The following is a 342-amino-acid chain: Heparan sulfate glucosamine 3-O-sulfotransferase 6 (342 aa).

Residues 1–31 lie on the Cytoplasmic side of the membrane; that stretch reads MAGSGGLGGGAGDLQGAGTGQGTALRALRAP. The helical; Signal-anchor for type II membrane protein transmembrane segment at 32–49 threads the bilayer; it reads LALVVLLLSAYCLFALPG. Residues 50–342 lie on the Lumenal side of the membrane; sequence RCPPAARAPA…QMTGQDFGWD (293 aa). The segment at 56 to 75 is disordered; it reads RAPAPVPAPAEPPHTSLRLR. 100–104 contacts 3'-phosphoadenylyl sulfate; that stretch reads KGGTR. Residues 122–128 and 153–156 contribute to the substrate site; these read EPHFFDR and KTPS. Positions 181 and 189 each coordinate 3'-phosphoadenylyl sulfate. 220 to 221 provides a ligand contact to substrate; it reads WS. N-linked (GlcNAc...) asparagine glycosylation is present at N281. A disulfide bridge connects residues C288 and C300. Residue 305–309 participates in 3'-phosphoadenylyl sulfate binding; the sequence is KGRPH.

This sequence belongs to the sulfotransferase 1 family. As to expression, expressed in liver and kidney, followed by heart, brain, lung and testis.

Its subcellular location is the golgi apparatus membrane. It carries out the reaction alpha-D-glucosaminyl-[heparan sulfate](n) + 3'-phosphoadenylyl sulfate = 3-sulfo-alpha-D-glucosaminyl-[heparan sulfate](n) + adenosine 3',5'-bisphosphate + H(+). Sulfotransferase that utilizes 3'-phospho-5'-adenylyl sulfate (PAPS) to catalyze the transfer of a sulfo group to heparan sulfate. Unlike 3-OST-1, does not convert non-anticoagulant heparan sulfate to anticoagulant heparan sulfate. The protein is Heparan sulfate glucosamine 3-O-sulfotransferase 6 (Hs3st6) of Mus musculus (Mouse).